A 470-amino-acid chain; its full sequence is 3-isopropylmalate dehydratase large subunit (470 aa).

The [4Fe-4S] cluster site is built by cysteine 351, cysteine 411, and cysteine 414.

It belongs to the aconitase/IPM isomerase family. LeuC type 1 subfamily. In terms of assembly, heterodimer of LeuC and LeuD. It depends on [4Fe-4S] cluster as a cofactor.

The catalysed reaction is (2R,3S)-3-isopropylmalate = (2S)-2-isopropylmalate. Its pathway is amino-acid biosynthesis; L-leucine biosynthesis; L-leucine from 3-methyl-2-oxobutanoate: step 2/4. Catalyzes the isomerization between 2-isopropylmalate and 3-isopropylmalate, via the formation of 2-isopropylmaleate. In Shewanella frigidimarina (strain NCIMB 400), this protein is 3-isopropylmalate dehydratase large subunit.